Consider the following 250-residue polypeptide: Probable transcriptional regulatory protein tll0175 (250 aa).

The protein belongs to the TACO1 family.

It localises to the cytoplasm. The protein is Probable transcriptional regulatory protein tll0175 of Thermosynechococcus vestitus (strain NIES-2133 / IAM M-273 / BP-1).